Consider the following 573-residue polypeptide: Threonine--tRNA ligase (573 aa).

Positions 174–474 (DHRRINKILE…LLEQTKGALD (301 aa)) are catalytic. Positions 268, 319, and 451 each coordinate Zn(2+).

This sequence belongs to the class-II aminoacyl-tRNA synthetase family. In terms of assembly, homodimer. Requires Zn(2+) as cofactor.

Its subcellular location is the cytoplasm. It catalyses the reaction tRNA(Thr) + L-threonine + ATP = L-threonyl-tRNA(Thr) + AMP + diphosphate + H(+). Catalyzes the attachment of threonine to tRNA(Thr) in a two-step reaction: L-threonine is first activated by ATP to form Thr-AMP and then transferred to the acceptor end of tRNA(Thr). Also edits incorrectly charged L-seryl-tRNA(Thr). This Mycoplasmoides gallisepticum (strain R(low / passage 15 / clone 2)) (Mycoplasma gallisepticum) protein is Threonine--tRNA ligase.